An 821-amino-acid chain; its full sequence is V-type proton ATPase subunit a3 (821 aa).

N-acetylalanine is present on Ala2. The Cytoplasmic segment spans residues Ala2–Thr421. Residues Lys97 to Ala144 adopt a coiled-coil conformation. The residue at position 174 (Ser174) is a Phosphoserine. The chain crosses the membrane as a helical span at residues Phe422–Ala442. Residues Thr443–Arg469 are Vacuolar-facing. Residues Tyr470–Phe490 form a helical membrane-spanning segment. Residues Ser491 to Lys548 lie on the Cytoplasmic side of the membrane. A helical transmembrane segment spans residues Met549–Ala569. Residues Arg570 to Gln581 lie on the Vacuolar side of the membrane. Residues Phe582–Ile602 traverse the membrane as a helical segment. Topologically, residues Lys603–Gln640 are cytoplasmic. Residues Leu641–Ile661 form a helical membrane-spanning segment. The Vacuolar portion of the chain corresponds to Leu662–Pro758. A helical membrane pass occupies residues Leu759–Met779. Over Glu780 to Glu821 the chain is Cytoplasmic.

The protein belongs to the V-ATPase 116 kDa subunit family. V-ATPase is a heteromultimeric enzyme composed of a peripheral catalytic V1 complex (components A to H) attached to an integral membrane V0 proton pore complex (components: a, c, c'', d and e). As to expression, expressed in etiolated seedlings hypocotyls.

It is found in the vacuole membrane. Essential component of the vacuolar proton pump (V-ATPase), a multimeric enzyme that catalyzes the translocation of protons across the membranes. Required for assembly and activity of the V-ATPase. Involved in vacuolar nutrient storage (e.g. accumulation and storage of nitrate) and in tolerance to some toxic ions (e.g. zinc ions sequestration in vacuoles). The protein is V-type proton ATPase subunit a3 (VHA-a3) of Arabidopsis thaliana (Mouse-ear cress).